A 254-amino-acid chain; its full sequence is Proteasome subunit alpha (254 aa).

The interval 231–254 (ESGAASADGEAETEAETDSGSDEE) is disordered. Residues 239–254 (GEAETEAETDSGSDEE) are compositionally biased toward acidic residues.

The protein belongs to the peptidase T1A family. As to quaternary structure, the 20S proteasome core is composed of 14 alpha and 14 beta subunits that assemble into four stacked heptameric rings, resulting in a barrel-shaped structure. The two inner rings, each composed of seven catalytic beta subunits, are sandwiched by two outer rings, each composed of seven alpha subunits. The catalytic chamber with the active sites is on the inside of the barrel. Has probably a gated structure, the ends of the cylinder being occluded by the N-termini of the alpha-subunits. Is likely capped by the proteasome-associated ATPase, ARC. The N-terminus is blocked.

The protein localises to the cytoplasm. The protein operates within protein degradation; proteasomal Pup-dependent pathway. With respect to regulation, the formation of the proteasomal ATPase ARC-20S proteasome complex, likely via the docking of the C-termini of ARC into the intersubunit pockets in the alpha-rings, may trigger opening of the gate for substrate entry. Interconversion between the open-gate and close-gate conformations leads to a dynamic regulation of the 20S proteasome proteolysis activity. Peptidolytic activity is completely inhibited by lactacystin, and to a lesser extent, by N-acetyl-Leu-Leu-norleucinal (Ac-LLnL) and benzoyloxycarbonyl-Leu-Leu-Leu-vinylsulfone (Z-LLL-VS) in vitro. Component of the proteasome core, a large protease complex with broad specificity involved in protein degradation. The S.coelicolor proteasome is able to cleave oligopeptides after hydrophobic residues, but not after basic or acidic residues, thus displaying chymotrypsin-like activity but not trypsin-like activity. The chain is Proteasome subunit alpha from Streptomyces coelicolor (strain ATCC BAA-471 / A3(2) / M145).